The primary structure comprises 422 residues: ATP phosphoribosyltransferase regulatory subunit (422 aa).

This sequence belongs to the class-II aminoacyl-tRNA synthetase family. HisZ subfamily. As to quaternary structure, heteromultimer composed of HisG and HisZ subunits.

It is found in the cytoplasm. It functions in the pathway amino-acid biosynthesis; L-histidine biosynthesis; L-histidine from 5-phospho-alpha-D-ribose 1-diphosphate: step 1/9. Functionally, required for the first step of histidine biosynthesis. May allow the feedback regulation of ATP phosphoribosyltransferase activity by histidine. This Clostridium botulinum (strain Langeland / NCTC 10281 / Type F) protein is ATP phosphoribosyltransferase regulatory subunit.